Here is a 1093-residue protein sequence, read N- to C-terminus: Carbamoyl phosphate synthase large chain (1093 aa).

A carboxyphosphate synthetic domain region spans residues 1–412 (MPRRNDIRKI…SLMKALRSLE (412 aa)). Positions 139, 179, 185, 186, 218, 220, 225, 251, 252, 253, 295, and 309 each coordinate ATP. The ATP-grasp 1 domain occupies 143-338 (KDAMTRIGLD…IAKIAAKLAV (196 aa)). Gln295, Glu309, and Asn311 together coordinate Mg(2+). Gln295, Glu309, and Asn311 together coordinate Mn(2+). Residues 413 to 560 (TGKRVGAEVL…YSSYEEEDEA (148 aa)) are oligomerization domain. Residues 561–952 (PQTDKRKVII…AFAKAQLSAG (392 aa)) are carbamoyl phosphate synthetic domain. Residues 689-880 (GKLLEQLQIP…LAKIASRLMT (192 aa)) enclose the ATP-grasp 2 domain. 10 residues coordinate ATP: Arg725, His764, Leu766, Glu771, Gly796, Ile797, His798, Ser799, Gln839, and Glu851. Mg(2+)-binding residues include Gln839, Glu851, and Asn853. Mn(2+) contacts are provided by Gln839, Glu851, and Asn853. In terms of domain architecture, MGS-like spans 953-1093 (LILPSSGTVF…QLLHAGHAVK (141 aa)). Residues 953-1093 (LILPSSGTVF…QLLHAGHAVK (141 aa)) are allosteric domain.

This sequence belongs to the CarB family. As to quaternary structure, composed of two chains; the small (or glutamine) chain promotes the hydrolysis of glutamine to ammonia, which is used by the large (or ammonia) chain to synthesize carbamoyl phosphate. Tetramer of heterodimers (alpha,beta)4. It depends on Mg(2+) as a cofactor. Requires Mn(2+) as cofactor.

The catalysed reaction is hydrogencarbonate + L-glutamine + 2 ATP + H2O = carbamoyl phosphate + L-glutamate + 2 ADP + phosphate + 2 H(+). The enzyme catalyses hydrogencarbonate + NH4(+) + 2 ATP = carbamoyl phosphate + 2 ADP + phosphate + 2 H(+). Its pathway is amino-acid biosynthesis; L-arginine biosynthesis; carbamoyl phosphate from bicarbonate: step 1/1. The protein operates within pyrimidine metabolism; UMP biosynthesis via de novo pathway; (S)-dihydroorotate from bicarbonate: step 1/3. Functionally, large subunit of the glutamine-dependent carbamoyl phosphate synthetase (CPSase). CPSase catalyzes the formation of carbamoyl phosphate from the ammonia moiety of glutamine, carbonate, and phosphate donated by ATP, constituting the first step of 2 biosynthetic pathways, one leading to arginine and/or urea and the other to pyrimidine nucleotides. The large subunit (synthetase) binds the substrates ammonia (free or transferred from glutamine from the small subunit), hydrogencarbonate and ATP and carries out an ATP-coupled ligase reaction, activating hydrogencarbonate by forming carboxy phosphate which reacts with ammonia to form carbamoyl phosphate. The chain is Carbamoyl phosphate synthase large chain from Acidobacterium capsulatum (strain ATCC 51196 / DSM 11244 / BCRC 80197 / JCM 7670 / NBRC 15755 / NCIMB 13165 / 161).